The sequence spans 133 residues: ATP synthase epsilon chain, chloroplastic (133 aa).

The protein belongs to the ATPase epsilon chain family. In terms of assembly, F-type ATPases have 2 components, CF(1) - the catalytic core - and CF(0) - the membrane proton channel. CF(1) has five subunits: alpha(3), beta(3), gamma(1), delta(1), epsilon(1). CF(0) has three main subunits: a, b and c.

The protein localises to the plastid. The protein resides in the chloroplast thylakoid membrane. Functionally, produces ATP from ADP in the presence of a proton gradient across the membrane. The chain is ATP synthase epsilon chain, chloroplastic from Nicotiana tomentosiformis (Tobacco).